Reading from the N-terminus, the 246-residue chain is Probable phosphatase Ssed_2939 (246 aa).

Positions 8, 10, 16, 41, 74, 102, 132, 193, and 195 each coordinate Zn(2+).

The protein belongs to the PHP family. Zn(2+) serves as cofactor.

This chain is Probable phosphatase Ssed_2939, found in Shewanella sediminis (strain HAW-EB3).